We begin with the raw amino-acid sequence, 341 residues long: Glucokinase (341 aa).

18–23 (GDIGGT) is an ATP binding site.

Belongs to the bacterial glucokinase family.

The protein localises to the cytoplasm. It carries out the reaction D-glucose + ATP = D-glucose 6-phosphate + ADP + H(+). The protein is Glucokinase of Rhizobium etli (strain CIAT 652).